A 249-amino-acid polypeptide reads, in one-letter code: Pyridoxine 5'-phosphate synthase (249 aa).

Asparagine 7 serves as a coordination point for 3-amino-2-oxopropyl phosphate. 9-10 (DH) provides a ligand contact to 1-deoxy-D-xylulose 5-phosphate. Residue arginine 18 coordinates 3-amino-2-oxopropyl phosphate. Histidine 43 serves as the catalytic Proton acceptor. 1-deoxy-D-xylulose 5-phosphate is bound by residues arginine 45 and histidine 50. Glutamate 70 serves as the catalytic Proton acceptor. Position 100 (threonine 100) interacts with 1-deoxy-D-xylulose 5-phosphate. The active-site Proton donor is the histidine 190. Residues glycine 191 and 212-213 (GH) each bind 3-amino-2-oxopropyl phosphate.

The protein belongs to the PNP synthase family. As to quaternary structure, homooctamer; tetramer of dimers.

Its subcellular location is the cytoplasm. It carries out the reaction 3-amino-2-oxopropyl phosphate + 1-deoxy-D-xylulose 5-phosphate = pyridoxine 5'-phosphate + phosphate + 2 H2O + H(+). It functions in the pathway cofactor biosynthesis; pyridoxine 5'-phosphate biosynthesis; pyridoxine 5'-phosphate from D-erythrose 4-phosphate: step 5/5. Catalyzes the complicated ring closure reaction between the two acyclic compounds 1-deoxy-D-xylulose-5-phosphate (DXP) and 3-amino-2-oxopropyl phosphate (1-amino-acetone-3-phosphate or AAP) to form pyridoxine 5'-phosphate (PNP) and inorganic phosphate. The polypeptide is Pyridoxine 5'-phosphate synthase (Synechococcus sp. (strain CC9605)).